A 576-amino-acid chain; its full sequence is RNA-directed RNA polymerase subunit beta (576 aa).

Positions 259-391 constitute a RdRp catalytic domain; it reads RLARDGSLLN…PNRKKTFCDG (133 aa). Asp274, Asp359, and Asp360 together coordinate Mg(2+).

Homodimer; the replicase complex can dimerize. Part of the viral RNA-dependent RNA polymerase complex, the other subunits are the host ribosomal protein S1, EF-Tu and EF-Ts. S1 is needed for the initiation of genomic RNA (+)-strand replication. Requires Mg(2+) as cofactor.

It carries out the reaction RNA(n) + a ribonucleoside 5'-triphosphate = RNA(n+1) + diphosphate. Its function is as follows. This is the catalytic subunit of the viral RNA-dependent RNA polymerase complex. This complex is involved in viral RNA replication that produces (+)-stranded genomes via a complementary, (-)-stranded intermediate. Binds RNA cooperatively with the host ribosomal protein S1. This is RNA-directed RNA polymerase subunit beta from Enterobacteria phage SP (Bacteriophage SP).